The chain runs to 188 residues: Grand meiotic recombination cluster protein 2 (188 aa).

Composition is skewed to polar residues over residues 1–13 and 21–31; these read MSDT…QSSE and ERTNSLKSPDV. Positions 1 to 31 are disordered; the sequence is MSDTTEVPRQSSENDQDNNLERTNSLKSPDV.

In terms of biological role, probable transcriptional activator involved in meiotic prophase and synaptonemal complex (SC) assembly. The sequence is that of Grand meiotic recombination cluster protein 2 (GMC2) from Saccharomyces cerevisiae (strain ATCC 204508 / S288c) (Baker's yeast).